The chain runs to 88 residues: Exodeoxyribonuclease 7 small subunit (88 aa).

The protein belongs to the XseB family. Heterooligomer composed of large and small subunits.

It is found in the cytoplasm. The catalysed reaction is Exonucleolytic cleavage in either 5'- to 3'- or 3'- to 5'-direction to yield nucleoside 5'-phosphates.. Bidirectionally degrades single-stranded DNA into large acid-insoluble oligonucleotides, which are then degraded further into small acid-soluble oligonucleotides. The polypeptide is Exodeoxyribonuclease 7 small subunit (Tolumonas auensis (strain DSM 9187 / NBRC 110442 / TA 4)).